A 312-amino-acid chain; its full sequence is tRNA uridine(34) hydroxylase (312 aa).

The Rhodanese domain maps to 130-225; it reads RGDDVVFFDG…YGEKYGNDGL (96 aa). The active-site Cysteine persulfide intermediate is the cysteine 185.

It belongs to the TrhO family.

The enzyme catalyses uridine(34) in tRNA + AH2 + O2 = 5-hydroxyuridine(34) in tRNA + A + H2O. Functionally, catalyzes oxygen-dependent 5-hydroxyuridine (ho5U) modification at position 34 in tRNAs. In Corynebacterium diphtheriae (strain ATCC 700971 / NCTC 13129 / Biotype gravis), this protein is tRNA uridine(34) hydroxylase.